The chain runs to 365 residues: Anhydro-N-acetylmuramic acid kinase (365 aa).

Residue 9–16 participates in ATP binding; that stretch reads GTSLDGVD.

It belongs to the anhydro-N-acetylmuramic acid kinase family.

It catalyses the reaction 1,6-anhydro-N-acetyl-beta-muramate + ATP + H2O = N-acetyl-D-muramate 6-phosphate + ADP + H(+). Its pathway is amino-sugar metabolism; 1,6-anhydro-N-acetylmuramate degradation. It functions in the pathway cell wall biogenesis; peptidoglycan recycling. Catalyzes the specific phosphorylation of 1,6-anhydro-N-acetylmuramic acid (anhMurNAc) with the simultaneous cleavage of the 1,6-anhydro ring, generating MurNAc-6-P. Is required for the utilization of anhMurNAc either imported from the medium or derived from its own cell wall murein, and thus plays a role in cell wall recycling. This Rhodopseudomonas palustris (strain BisB18) protein is Anhydro-N-acetylmuramic acid kinase.